We begin with the raw amino-acid sequence, 509 residues long: Maturase K (509 aa).

It belongs to the intron maturase 2 family. MatK subfamily.

It localises to the plastid. Its subcellular location is the chloroplast. Usually encoded in the trnK tRNA gene intron. Probably assists in splicing its own and other chloroplast group II introns. This chain is Maturase K, found in Nicotiana sylvestris (Wood tobacco).